Here is a 234-residue protein sequence, read N- to C-terminus: Leucyl/phenylalanyl-tRNA--protein transferase (234 aa).

The protein belongs to the L/F-transferase family.

It is found in the cytoplasm. The catalysed reaction is N-terminal L-lysyl-[protein] + L-leucyl-tRNA(Leu) = N-terminal L-leucyl-L-lysyl-[protein] + tRNA(Leu) + H(+). The enzyme catalyses N-terminal L-arginyl-[protein] + L-leucyl-tRNA(Leu) = N-terminal L-leucyl-L-arginyl-[protein] + tRNA(Leu) + H(+). It catalyses the reaction L-phenylalanyl-tRNA(Phe) + an N-terminal L-alpha-aminoacyl-[protein] = an N-terminal L-phenylalanyl-L-alpha-aminoacyl-[protein] + tRNA(Phe). Functionally, functions in the N-end rule pathway of protein degradation where it conjugates Leu, Phe and, less efficiently, Met from aminoacyl-tRNAs to the N-termini of proteins containing an N-terminal arginine or lysine. The polypeptide is Leucyl/phenylalanyl-tRNA--protein transferase (Escherichia coli O157:H7 (strain EC4115 / EHEC)).